The primary structure comprises 418 residues: Probable serine/threonine-protein kinase DDB_G0280461 (418 aa).

Residues 14-271 (KIEENEFSKG…IVQTLDQLAI (258 aa)) enclose the Protein kinase domain. Residues 20 to 28 (FSKGSFAKV) and Lys41 contribute to the ATP site. Asp139 (proton acceptor) is an active-site residue. Disordered regions lie at residues 327–356 (NNNN…NNNN) and 377–418 (SVNS…CLIN). Over residues 377–402 (SVNSSFSNSSLGSNGSNSSGTSTSSG) the composition is skewed to low complexity. Over residues 403 to 418 (GKKRSQKRKSWKCLIN) the composition is skewed to basic residues.

The protein belongs to the protein kinase superfamily. TKL Ser/Thr protein kinase family.

The enzyme catalyses L-seryl-[protein] + ATP = O-phospho-L-seryl-[protein] + ADP + H(+). The catalysed reaction is L-threonyl-[protein] + ATP = O-phospho-L-threonyl-[protein] + ADP + H(+). The chain is Probable serine/threonine-protein kinase DDB_G0280461 from Dictyostelium discoideum (Social amoeba).